The following is a 239-amino-acid chain: Ribosomal RNA large subunit methyltransferase E (239 aa).

Glycine 81, tryptophan 83, aspartate 104, aspartate 120, and aspartate 144 together coordinate S-adenosyl-L-methionine. Lysine 184 functions as the Proton acceptor in the catalytic mechanism.

It belongs to the class I-like SAM-binding methyltransferase superfamily. RNA methyltransferase RlmE family.

The protein resides in the cytoplasm. It catalyses the reaction uridine(2552) in 23S rRNA + S-adenosyl-L-methionine = 2'-O-methyluridine(2552) in 23S rRNA + S-adenosyl-L-homocysteine + H(+). Functionally, specifically methylates the uridine in position 2552 of 23S rRNA at the 2'-O position of the ribose in the fully assembled 50S ribosomal subunit. The protein is Ribosomal RNA large subunit methyltransferase E of Rhizobium rhizogenes (strain K84 / ATCC BAA-868) (Agrobacterium radiobacter).